We begin with the raw amino-acid sequence, 163 residues long: Photosystem II extrinsic protein V (163 aa).

The first 26 residues, 1 to 26 (MLKKCVWLAVALCLCLWQFTMGTALA), serve as a signal peptide directing secretion. The heme c site is built by H67 and H118.

The protein belongs to the cytochrome c family. PsbV subfamily. In terms of assembly, PSII is composed of 1 copy each of membrane proteins PsbA, PsbB, PsbC, PsbD, PsbE, PsbF, PsbH, PsbI, PsbJ, PsbK, PsbL, PsbM, PsbT, PsbX, PsbY, PsbZ, Psb30/Ycf12, peripheral proteins PsbO, CyanoQ (PsbQ), PsbU, PsbV and a large number of cofactors. It forms dimeric complexes. Heme c serves as cofactor.

The protein localises to the cellular thylakoid membrane. In terms of biological role, one of the extrinsic, lumenal subunits of photosystem II (PSII). PSII is a light-driven water plastoquinone oxidoreductase, using light energy to abstract electrons from H(2)O, generating a proton gradient subsequently used for ATP formation. The extrinsic proteins stabilize the structure of photosystem II oxygen-evolving complex (OEC), the ion environment of oxygen evolution and protect the OEC against heat-induced inactivation. Low-potential cytochrome c that plays a role in the OEC of PSII. This chain is Photosystem II extrinsic protein V, found in Thermosynechococcus vestitus (strain NIES-2133 / IAM M-273 / BP-1).